A 406-amino-acid polypeptide reads, in one-letter code: Pyridinium-3,5-bisthiocarboxylic acid mononucleotide nickel insertion protein (406 aa).

This sequence belongs to the LarC family.

The catalysed reaction is Ni(II)-pyridinium-3,5-bisthiocarboxylate mononucleotide = pyridinium-3,5-bisthiocarboxylate mononucleotide + Ni(2+). Functionally, involved in the biosynthesis of a nickel-pincer cofactor ((SCS)Ni(II) pincer complex). Binds Ni(2+), and functions in nickel delivery to pyridinium-3,5-bisthiocarboxylic acid mononucleotide (P2TMN), to form the mature cofactor. Is thus probably required for the activation of nickel-pincer cofactor-dependent enzymes. This is Pyridinium-3,5-bisthiocarboxylic acid mononucleotide nickel insertion protein from Akkermansia muciniphila (strain ATCC BAA-835 / DSM 22959 / JCM 33894 / BCRC 81048 / CCUG 64013 / CIP 107961 / Muc).